We begin with the raw amino-acid sequence, 516 residues long: Circadian clock oscillator protein KaiC (516 aa).

2 KaiC domains span residues 1 to 244 (MNQP…INIF) and 258 to 516 (ARIS…TLPE). Gly46, Thr47, Gly48, Lys49, Thr50, Leu51, Ser86, Lys221, Leu222, Arg223, Thr225, His227, Thr237, Thr287, Gly288, Thr289, Gly290, Lys291, Thr292, and Leu293 together coordinate ATP. A Mg(2+)-binding site is contributed by Thr50. Residue Thr292 coordinates Mg(2+). Glu315 is a binding site for Mg(2+). Trp328 provides a ligand contact to ATP. Ser428 is subject to Phosphoserine; by autocatalysis. Thr429 is subject to Phosphothreonine; by autocatalysis. ATP contacts are provided by Arg448, Lys454, Met455, Arg456, Ser458, His460, and Lys462.

It belongs to the KaiC family. In terms of assembly, homohexamer; hexamerization is dependent on ATP-binding. The KaiABC complex composition changes during the circadian cycle to control KaiC phosphorylation. Complexes KaiC(6), KaiA(2-4):KaiC(6), KaiB(6):KaiC(6) and KaiC(6):KaiB(6):KaiA(12) are among the most important forms, many form cooperatively. KaiC interacts with SasA, activating its autokinase function and leading to RpaA activation. It depends on Mg(2+) as a cofactor. Post-translationally, phosphorylated on serine and threonine residues by autocatalysis. Has a 4 step phosphorylation cycle; the autokinase acts first on Thr-429, then Ser-428. When Ser-428 is modified KaiC switches to an autophosphatase mode, acting first on phospho-Thr-429 then phospho-Ser-428.

It catalyses the reaction L-seryl-[protein] + ATP = O-phospho-L-seryl-[protein] + ADP + H(+). It carries out the reaction L-threonyl-[protein] + ATP = O-phospho-L-threonyl-[protein] + ADP + H(+). The enzyme catalyses ATP + H2O = ADP + phosphate + H(+). The interaction with KaiA enhances its phosphorylation status, while the interaction with KaiB decreases it. Functionally, central component of the KaiABC oscillator complex, which constitutes the main circadian regulator in cyanobacteria. Complex composition changes during the circadian cycle to control KaiC phosphorylation. KaiA stimulates KaiC autophosphorylation, while KaiB sequesters KaiA, leading to KaiC autodephosphorylation. Clock output pathways impact the RpaA transcriptional regulator. KaiC enhances the autophosphorylation activity of SasA, which then transfers its phosphate group to RpaA to activate it. KaiB and KaiC together enhance the phospho-RpaA dephosphatase activity of CikA. In terms of biological role, has a weak, temperature-independent ATPase activity; ATPase activity defines the circadian period. The phosphorylation state of KaiC modulates its ATPase activity and effects KaiB binding. The sequence is that of Circadian clock oscillator protein KaiC from Picosynechococcus sp. (strain ATCC 27264 / PCC 7002 / PR-6) (Agmenellum quadruplicatum).